The chain runs to 512 residues: Activin receptor type-2B (512 aa).

The first 18 residues, 1-18, serve as a signal peptide directing secretion; sequence MTAPWVALALLWGSLCAG. The Extracellular segment spans residues 19 to 137; it reads SGRGEAETRE…PPPTAPTLLT (119 aa). 5 disulfides stabilise this stretch: Cys29–Cys59, Cys49–Cys77, Cys84–Cys103, Cys90–Cys102, and Cys104–Cys109. Residues Asn42 and Asn65 are each glycosylated (N-linked (GlcNAc...) asparagine). A helical membrane pass occupies residues 138 to 158; sequence VLAYSLLPIGGLSLIVLLAFW. Topologically, residues 159 to 512 are cytoplasmic; it reads MYRHRKPPYG…VDLPPKESSI (354 aa). The Protein kinase domain maps to 190 to 480; sequence LQLLEIKARG…AGCVEERVSL (291 aa). Residues 196–204 and Lys217 each bind ATP; that span reads KARGRFGCV. Asp321 (proton acceptor) is an active-site residue. The tract at residues 491–512 is interaction with DYNLT1; that stretch reads DCLVSLVTSVTNVDLPPKESSI.

It belongs to the protein kinase superfamily. TKL Ser/Thr protein kinase family. TGFB receptor subfamily. As to quaternary structure, forms an activin receptor complex with activin type II receptors such as ACVR1B. Interacts with VPS39. Interacts with DYNLT1. Interacts with BMP3. Interacts with BMP2. Interacts with BMP6. Requires Mg(2+) as cofactor. Mn(2+) is required as a cofactor. Post-translationally, phosphorylated. Constitutive phosphorylation is in part catalyzed by its own kinase activity.

The protein resides in the cell membrane. The enzyme catalyses L-threonyl-[receptor-protein] + ATP = O-phospho-L-threonyl-[receptor-protein] + ADP + H(+). It carries out the reaction L-seryl-[receptor-protein] + ATP = O-phospho-L-seryl-[receptor-protein] + ADP + H(+). Transmembrane serine/threonine kinase activin type-2 receptor forming an activin receptor complex with activin type-1 serine/threonine kinase receptors (ACVR1, ACVR1B or ACVR1c). Transduces the activin signal from the cell surface to the cytoplasm and is thus regulating many physiological and pathological processes including neuronal differentiation and neuronal survival, hair follicle development and cycling, FSH production by the pituitary gland, wound healing, extracellular matrix production, immunosuppression and carcinogenesis. Activin is also thought to have a paracrine or autocrine role in follicular development in the ovary. Within the receptor complex, the type-2 receptors act as a primary activin receptors (binds activin-A/INHBA, activin-B/INHBB as well as inhibin-A/INHA-INHBA). The type-1 receptors like ACVR1B act as downstream transducers of activin signals. Activin binds to type-2 receptor at the plasma membrane and activates its serine-threonine kinase. The activated receptor type-2 then phosphorylates and activates the type-1 receptor. Once activated, the type-1 receptor binds and phosphorylates the SMAD proteins SMAD2 and SMAD3, on serine residues of the C-terminal tail. Soon after their association with the activin receptor and subsequent phosphorylation, SMAD2 and SMAD3 are released into the cytoplasm where they interact with the common partner SMAD4. This SMAD complex translocates into the nucleus where it mediates activin-induced transcription. Inhibitory SMAD7, which is recruited to ACVR1B through FKBP1A, can prevent the association of SMAD2 and SMAD3 with the activin receptor complex, thereby blocking the activin signal. Activin signal transduction is also antagonized by the binding to the receptor of inhibin-B via the IGSF1 inhibin coreceptor. This chain is Activin receptor type-2B (ACVR2B), found in Homo sapiens (Human).